We begin with the raw amino-acid sequence, 310 residues long: tRNA uridine(34) hydroxylase (310 aa).

In terms of domain architecture, Rhodanese spans K127–S225. C185 (cysteine persulfide intermediate) is an active-site residue.

It belongs to the TrhO family.

The catalysed reaction is uridine(34) in tRNA + AH2 + O2 = 5-hydroxyuridine(34) in tRNA + A + H2O. Catalyzes oxygen-dependent 5-hydroxyuridine (ho5U) modification at position 34 in tRNAs. The protein is tRNA uridine(34) hydroxylase of Prochlorococcus marinus subsp. pastoris (strain CCMP1986 / NIES-2087 / MED4).